The primary structure comprises 488 residues: 3-octaprenyl-4-hydroxybenzoate carboxy-lyase (488 aa).

Residue N172 participates in Mn(2+) binding. Prenylated FMN is bound by residues 175–177, 189–191, and 194–195; these read IYR, RWL, and RG. E238 contacts Mn(2+). D287 (proton donor) is an active-site residue.

Belongs to the UbiD family. Homohexamer. The cofactor is prenylated FMN. Mn(2+) serves as cofactor.

The protein resides in the cell membrane. The enzyme catalyses a 4-hydroxy-3-(all-trans-polyprenyl)benzoate + H(+) = a 2-(all-trans-polyprenyl)phenol + CO2. The protein operates within cofactor biosynthesis; ubiquinone biosynthesis. Its function is as follows. Catalyzes the decarboxylation of 3-octaprenyl-4-hydroxy benzoate to 2-octaprenylphenol, an intermediate step in ubiquinone biosynthesis. The sequence is that of 3-octaprenyl-4-hydroxybenzoate carboxy-lyase from Legionella pneumophila (strain Paris).